The chain runs to 191 residues: UPF0669 protein C6orf120 homolog (191 aa).

The first 30 residues, Met-1–Ala-30, serve as a signal peptide directing secretion. Asn-53 carries an N-linked (GlcNAc...) asparagine glycan.

The protein belongs to the UPF0669 family.

The protein resides in the secreted. Its function is as follows. May be involved in induction of apoptosis in CD4(+) T-cells, but not CD8(+) T-cells or hepatocytes. This is UPF0669 protein C6orf120 homolog from Macaca fascicularis (Crab-eating macaque).